The primary structure comprises 441 residues: Ribosomal protein uS12 methylthiotransferase RimO (441 aa).

One can recognise an MTTase N-terminal domain in the interval 8–118; it reads PKIGFVSLGC…VLEHVHHYTP (111 aa). Residues Cys17, Cys53, Cys82, Cys150, Cys154, and Cys157 each contribute to the [4Fe-4S] cluster site. Residues 136–373 enclose the Radical SAM core domain; that stretch reads LTPRHYAYLK…MQLQQQISAE (238 aa). Residues 376 to 441 enclose the TRAM domain; that stretch reads QEKVGREILV…DEYDLWGTRV (66 aa).

Belongs to the methylthiotransferase family. RimO subfamily. [4Fe-4S] cluster is required as a cofactor.

Its subcellular location is the cytoplasm. The catalysed reaction is L-aspartate(89)-[ribosomal protein uS12]-hydrogen + (sulfur carrier)-SH + AH2 + 2 S-adenosyl-L-methionine = 3-methylsulfanyl-L-aspartate(89)-[ribosomal protein uS12]-hydrogen + (sulfur carrier)-H + 5'-deoxyadenosine + L-methionine + A + S-adenosyl-L-homocysteine + 2 H(+). Catalyzes the methylthiolation of an aspartic acid residue of ribosomal protein uS12. The chain is Ribosomal protein uS12 methylthiotransferase RimO from Klebsiella pneumoniae subsp. pneumoniae (strain ATCC 700721 / MGH 78578).